Here is a 444-residue protein sequence, read N- to C-terminus: Phosphoglucosamine mutase (444 aa).

S102 acts as the Phosphoserine intermediate in catalysis. Residues S102, D241, D243, and D245 each coordinate Mg(2+). Phosphoserine is present on S102.

This sequence belongs to the phosphohexose mutase family. Mg(2+) is required as a cofactor. In terms of processing, activated by phosphorylation.

The catalysed reaction is alpha-D-glucosamine 1-phosphate = D-glucosamine 6-phosphate. Functionally, catalyzes the conversion of glucosamine-6-phosphate to glucosamine-1-phosphate. In Histophilus somni (strain 2336) (Haemophilus somnus), this protein is Phosphoglucosamine mutase.